A 278-amino-acid chain; its full sequence is NAD-dependent protein deacylase (278 aa).

In terms of domain architecture, Deacetylase sirtuin-type spans 22–270 (RSRIFHRDSA…PEYIREFLTT (249 aa)). 46-65 (GAGISAESGIRTFRADDGLW) provides a ligand contact to NAD(+). Residues Tyr90 and Arg93 each contribute to the substrate site. Residue 127 to 130 (QNID) participates in NAD(+) binding. His145 serves as the catalytic Proton acceptor. The Zn(2+) site is built by Cys153 and Cys172. NAD(+) contacts are provided by residues 212–214 (GTS), 238–240 (NLE), and Ala256.

This sequence belongs to the sirtuin family. Class III subfamily. Zn(2+) is required as a cofactor.

It localises to the cytoplasm. It carries out the reaction N(6)-acetyl-L-lysyl-[protein] + NAD(+) + H2O = 2''-O-acetyl-ADP-D-ribose + nicotinamide + L-lysyl-[protein]. It catalyses the reaction N(6)-succinyl-L-lysyl-[protein] + NAD(+) + H2O = 2''-O-succinyl-ADP-D-ribose + nicotinamide + L-lysyl-[protein]. The catalysed reaction is N(6)-(2-hydroxyisobutanoyl)-L-lysyl-[protein] + NAD(+) + H2O = 2''-O-(2-hydroxyisobutanoyl)-ADP-D-ribose + nicotinamide + L-lysyl-[protein]. Functionally, NAD-dependent lysine deacetylase that specifically removes acetyl groups on target proteins. Also acts as a protein-lysine deacylase by mediating protein desuccinylation and de-2-hydroxyisobutyrylation. Modulates the activities of several proteins which are inactive in their acylated form. In Yersinia pestis, this protein is NAD-dependent protein deacylase.